The chain runs to 472 residues: D-2-hydroxyglutarate dehydrogenase (472 aa).

The region spanning 36 to 215 (WTPNPLAIAL…VEATLRLTDP (180 aa)) is the FAD-binding PCMH-type domain. Positions 323, 327, and 337 each coordinate (R)-2-hydroxyglutarate. The (R)-malate site is built by Arg323, Thr327, and Lys337. Residues His372 and His379 each contribute to the Zn(2+) site. (R)-2-hydroxyglutarate is bound at residue Asn381. Glu418 contributes to the Zn(2+) binding site. Residue His419 coordinates (R)-2-hydroxyglutarate. A (R)-malate-binding site is contributed by His419.

Belongs to the FAD-binding oxidoreductase/transferase type 4 family. Homodimer. FAD is required as a cofactor.

The enzyme catalyses (R)-2-hydroxyglutarate + A = 2-oxoglutarate + AH2. It carries out the reaction (R)-malate + A = oxaloacetate + AH2. Activated by Zn(2+) ions. Functionally, catalyzes the dehydrogenation of (R)-2-hydroxyglutarate (D-2-hydroxyglutarate) to 2-oxoglutarate. Also has a low activity on D-malate in vitro. Is functionally tied to L-serine biosynthesis, via its coupling with the D-3-phosphoglycerate dehydrogenase SerA, encoded by the adjacent gene in the locus. Active in vitro with the artificial electron acceptor 2,6-dichlorophenolindophenol (DCPIP), but not with NAD, NADP, or cytochrome c. Also displays a very low oxidase activity in vitro on D-2-hydroxyglutarate and L-2-hydroxyglutarate with O2 as the electron acceptor, but this activity is most likely not physiological. The sequence is that of D-2-hydroxyglutarate dehydrogenase from Xanthomonas citri pv. viticola (strain LMG 965 / NCPPB 2475 / ICMP 3867 / CFBP 7660) (Xanthomonas campestris pv. viticola).